The primary structure comprises 299 residues: Pyridoxal 5'-phosphate synthase subunit PdxS (299 aa).

A D-ribose 5-phosphate-binding site is contributed by aspartate 24. The active-site Schiff-base intermediate with D-ribose 5-phosphate is the lysine 81. Glycine 153 contacts D-ribose 5-phosphate. Arginine 165 contributes to the D-glyceraldehyde 3-phosphate binding site. D-ribose 5-phosphate contacts are provided by residues glycine 219 and 240–241 (GS).

The protein belongs to the PdxS/SNZ family. In the presence of PdxT, forms a dodecamer of heterodimers.

The enzyme catalyses aldehydo-D-ribose 5-phosphate + D-glyceraldehyde 3-phosphate + L-glutamine = pyridoxal 5'-phosphate + L-glutamate + phosphate + 3 H2O + H(+). The protein operates within cofactor biosynthesis; pyridoxal 5'-phosphate biosynthesis. Functionally, catalyzes the formation of pyridoxal 5'-phosphate from ribose 5-phosphate (RBP), glyceraldehyde 3-phosphate (G3P) and ammonia. The ammonia is provided by the PdxT subunit. Can also use ribulose 5-phosphate and dihydroxyacetone phosphate as substrates, resulting from enzyme-catalyzed isomerization of RBP and G3P, respectively. In Methanococcus maripaludis (strain C5 / ATCC BAA-1333), this protein is Pyridoxal 5'-phosphate synthase subunit PdxS.